We begin with the raw amino-acid sequence, 570 residues long: Dwarfin sma-4 (570 aa).

The disordered stretch occupies residues 115–134; it reads SSQASSQPPPTPTVNPTPIP. The segment covering 121-134 has biased composition (pro residues); that stretch reads QPPPTPTVNPTPIP. Residues 150–273 form the MH1 domain; that stretch reads QISHVLQCYQ…YERVVSNRIT (124 aa). Residues Cys203, Cys247, Cys258, and His263 each contribute to the Zn(2+) site. Residues 350–570 enclose the MH2 domain; that stretch reads WCSIIYYELD…LKNSSQFGSS (221 aa).

It belongs to the dwarfin/SMAD family.

The protein localises to the cytoplasm. The protein resides in the nucleus. In terms of biological role, involved in TGF-beta pathway. The chain is Dwarfin sma-4 (sma-4) from Caenorhabditis elegans.